The following is a 419-amino-acid chain: N-acylneuraminate cytidylyltransferase (419 aa).

Belongs to the CMP-NeuNAc synthase family. As to quaternary structure, monomer. May form aggregates. The cofactor is Mg(2+). Requires Mn(2+) as cofactor.

Its subcellular location is the cytoplasm. It catalyses the reaction an N-acylneuraminate + CTP = a CMP-N-acyl-beta-neuraminate + diphosphate. Inhibited by the CTP analogs 5-mercuri-CTP and CTP-2',3'-dialdehyde. Functionally, catalyzes the formation of CMP-N-acetylneuraminic acid (CMP-NeuNAc), which is essential for the formation of the capsule. The polypeptide is N-acylneuraminate cytidylyltransferase (neuA) (Escherichia coli O18:K1:H7 (strain RS218 / NMEC)).